The following is a 409-amino-acid chain: Sprouty-related, EVH1 domain-containing protein 2 (409 aa).

One can recognise a WH1 domain in the interval 5–121 (APPEDDSYIV…RGVRKAIEDL (117 aa)). The segment at 121 to 170 (LTEGSTTSSSTIHNEAELGDDDVFATSTDSSSNSSQKREPPVRTIASPLP) is disordered. Residues 123–133 (EGSTTSSSTIH) are compositionally biased toward polar residues. Over residues 146 to 155 (TSTDSSSNSS) the composition is skewed to low complexity. The 55-residue stretch at 199 to 253 (PHRHVSFPDDDDEIVRINPRERNWLTGYEDYRQAPIHRKYPDTESIDSYVRFAKS) folds into the KBD domain. The region spanning 299-407 (RCIYCRDMFN…CGCCGGKHKA (109 aa)) is the SPR domain.

It localises to the cell membrane. The protein resides in the cytoplasmic vesicle. Its subcellular location is the secretory vesicle membrane. It is found in the cytoplasm. Negatively regulates Ras signaling pathways and downstream activation of MAP kinases. In Xenopus tropicalis (Western clawed frog), this protein is Sprouty-related, EVH1 domain-containing protein 2 (spred2).